We begin with the raw amino-acid sequence, 256 residues long: 5-keto-4-deoxy-D-glucarate aldolase (256 aa).

Histidine 50 functions as the Proton acceptor in the catalytic mechanism. Position 151 (glutamine 151) interacts with substrate. Glutamate 153 contributes to the Mg(2+) binding site. Serine 178 and aspartate 179 together coordinate substrate. Aspartate 179 contributes to the Mg(2+) binding site.

The protein belongs to the HpcH/HpaI aldolase family. KDGluc aldolase subfamily. Homohexamer; trimer of dimers. Requires Mg(2+) as cofactor.

It catalyses the reaction 5-dehydro-4-deoxy-D-glucarate = 2-hydroxy-3-oxopropanoate + pyruvate. The enzyme catalyses 2-dehydro-3-deoxy-D-glucarate = 2-hydroxy-3-oxopropanoate + pyruvate. It participates in carbohydrate acid metabolism; galactarate degradation; D-glycerate from galactarate: step 2/3. Catalyzes the reversible retro-aldol cleavage of both 5-keto-4-deoxy-D-glucarate and 2-keto-3-deoxy-D-glucarate to pyruvate and tartronic semialdehyde. This chain is 5-keto-4-deoxy-D-glucarate aldolase, found in Salmonella arizonae (strain ATCC BAA-731 / CDC346-86 / RSK2980).